The following is a 426-amino-acid chain: Pyrophosphate--fructose 6-phosphate 1-phosphotransferase 2 (426 aa).

Glycine 15 is a binding site for diphosphate. Aspartate 114 is a Mg(2+) binding site. Residues 140–142 (TID), 186–188 (MGR), glutamate 247, and 308–311 (YELR) each bind substrate. The Proton acceptor role is filled by aspartate 142.

It belongs to the phosphofructokinase type A (PFKA) family. PPi-dependent PFK group II subfamily. Clade 'Short' sub-subfamily. As to quaternary structure, homotetramer. It depends on Mg(2+) as a cofactor.

The protein resides in the cytoplasm. The enzyme catalyses beta-D-fructose 6-phosphate + diphosphate = beta-D-fructose 1,6-bisphosphate + phosphate + H(+). Its pathway is carbohydrate degradation; glycolysis; D-glyceraldehyde 3-phosphate and glycerone phosphate from D-glucose: step 3/4. With respect to regulation, non-allosteric. Functionally, catalyzes the phosphorylation of D-fructose 6-phosphate, the first committing step of glycolysis. Uses inorganic phosphate (PPi) as phosphoryl donor instead of ATP like common ATP-dependent phosphofructokinases (ATP-PFKs), which renders the reaction reversible, and can thus function both in glycolysis and gluconeogenesis. Consistently, PPi-PFK can replace the enzymes of both the forward (ATP-PFK) and reverse (fructose-bisphosphatase (FBPase)) reactions. The polypeptide is Pyrophosphate--fructose 6-phosphate 1-phosphotransferase 2 (pfk2) (Trichomonas vaginalis (strain ATCC PRA-98 / G3)).